Here is a 203-residue protein sequence, read N- to C-terminus: Probable GTP-binding protein EngB (203 aa).

Residues 22–195 enclose the EngB-type G domain; the sequence is GIPEIALAGR…WEEIVNQYNQ (174 aa). GTP-binding positions include 30-37, 57-61, 75-78, 142-145, and 174-176; these read GRSNVGKS, GKTRT, DLPG, TKAD, and VSS. Mg(2+) is bound by residues Ser37 and Thr59.

It belongs to the TRAFAC class TrmE-Era-EngA-EngB-Septin-like GTPase superfamily. EngB GTPase family. Requires Mg(2+) as cofactor.

In terms of biological role, necessary for normal cell division and for the maintenance of normal septation. This chain is Probable GTP-binding protein EngB, found in Clostridioides difficile (strain 630) (Peptoclostridium difficile).